An 882-amino-acid chain; its full sequence is Alanine--tRNA ligase (882 aa).

His564, His568, Cys666, and His670 together coordinate Zn(2+).

Belongs to the class-II aminoacyl-tRNA synthetase family. Zn(2+) serves as cofactor.

Its subcellular location is the cytoplasm. The enzyme catalyses tRNA(Ala) + L-alanine + ATP = L-alanyl-tRNA(Ala) + AMP + diphosphate. Catalyzes the attachment of alanine to tRNA(Ala) in a two-step reaction: alanine is first activated by ATP to form Ala-AMP and then transferred to the acceptor end of tRNA(Ala). Also edits incorrectly charged Ser-tRNA(Ala) and Gly-tRNA(Ala) via its editing domain. This Rubrobacter xylanophilus (strain DSM 9941 / JCM 11954 / NBRC 16129 / PRD-1) protein is Alanine--tRNA ligase.